Consider the following 367-residue polypeptide: tRNA/tmRNA (uracil-C(5))-methyltransferase (367 aa).

S-adenosyl-L-methionine-binding residues include glutamine 189, tyrosine 217, asparagine 222, glutamate 238, and aspartate 298. Cysteine 323 (nucleophile) is an active-site residue. Glutamate 357 (proton acceptor) is an active-site residue.

The protein belongs to the class I-like SAM-binding methyltransferase superfamily. RNA M5U methyltransferase family. TrmA subfamily.

It carries out the reaction uridine(54) in tRNA + S-adenosyl-L-methionine = 5-methyluridine(54) in tRNA + S-adenosyl-L-homocysteine + H(+). The catalysed reaction is uridine(341) in tmRNA + S-adenosyl-L-methionine = 5-methyluridine(341) in tmRNA + S-adenosyl-L-homocysteine + H(+). In terms of biological role, dual-specificity methyltransferase that catalyzes the formation of 5-methyluridine at position 54 (m5U54) in all tRNAs, and that of position 341 (m5U341) in tmRNA (transfer-mRNA). This Pseudoalteromonas translucida (strain TAC 125) protein is tRNA/tmRNA (uracil-C(5))-methyltransferase.